Here is a 348-residue protein sequence, read N- to C-terminus: MTQIADRPARPDETLAVAVSDITQSLTMVQAINRALYDAMAADERVLVFGEDVAVEGGVFRVTEGLADTFGADRCFDTPLAESAIIGIAVGLALRGFVPVPEIQFDGFSYPAFDQVVSHLAKYRTRTRGEVDMPVTVRIPSFGGIGAAEHHSDSTESYWVHTAGLKVVVPSTPGDAYWLLRHAIACPDPVMYLEPKRRYHGRGMVDTSRPEPPIGHAMVRRSGTDVTVVTYGNLVSTALSSADTAEQQHDWSLEVIDLRSLAPLDFDTIAASIQRTGRCVVMHEGPRSLGYGAGLAARIQEEMFYQLEAPVLRACGFDTPYPPARLEKLWLPGPDRLLDCVERVLRQP.

Thiamine diphosphate-binding positions include Glu-51, 80–82 (LAE), Gln-104, and 108–111 (FSYP). Residues 105-108 (FDGF) and His-151 contribute to the substrate site. Residue His-151 is the Proton acceptor of the active site.

Heteromer of E1 alpha (BkdA) and beta (BkdB) subunits. Part of the BCKADH complex, consisting of multiple copies of BkdA/BkdB (E1), BkdC (E2) and Lpd (E3). Thiamine diphosphate serves as cofactor.

It catalyses the reaction N(6)-[(R)-lipoyl]-L-lysyl-[protein] + 3-methyl-2-oxobutanoate + H(+) = N(6)-[(R)-S(8)-2-methylpropanoyldihydrolipoyl]-L-lysyl-[protein] + CO2. Its function is as follows. Component of the branched-chain alpha-ketoacid dehydrogenase (BCKADH) complex, that catalyzes the overall conversion of branched-chain alpha-ketoacids to acyl-CoA and CO(2). This is 3-methyl-2-oxobutanoate dehydrogenase subunit beta (bkdB) from Mycobacterium tuberculosis (strain CDC 1551 / Oshkosh).